The sequence spans 371 residues: Bifunctional enzyme IspD/IspF (371 aa).

The 2-C-methyl-D-erythritol 4-phosphate cytidylyltransferase stretch occupies residues 1–210 (MSEMSLIMLA…LNLPTPSFEI (210 aa)). The 2-C-methyl-D-erythritol 2,4-cyclodiphosphate synthase stretch occupies residues 211 to 371 (FTGNGFDVHE…NLKYFDWTRL (161 aa)). A divalent metal cation-binding residues include aspartate 217 and histidine 219. 4-CDP-2-C-methyl-D-erythritol 2-phosphate-binding positions include 217-219 (DVH) and 243-244 (HS). Histidine 251 contributes to the a divalent metal cation binding site. Residues 265–267 (DIG), 270–274 (YPDTD), 341–344 (TTTE), phenylalanine 348, and arginine 351 each bind 4-CDP-2-C-methyl-D-erythritol 2-phosphate.

The protein in the N-terminal section; belongs to the IspD/TarI cytidylyltransferase family. IspD subfamily. It in the C-terminal section; belongs to the IspF family. A divalent metal cation is required as a cofactor.

It carries out the reaction 2-C-methyl-D-erythritol 4-phosphate + CTP + H(+) = 4-CDP-2-C-methyl-D-erythritol + diphosphate. The catalysed reaction is 4-CDP-2-C-methyl-D-erythritol 2-phosphate = 2-C-methyl-D-erythritol 2,4-cyclic diphosphate + CMP. The protein operates within isoprenoid biosynthesis; isopentenyl diphosphate biosynthesis via DXP pathway; isopentenyl diphosphate from 1-deoxy-D-xylulose 5-phosphate: step 2/6. It functions in the pathway isoprenoid biosynthesis; isopentenyl diphosphate biosynthesis via DXP pathway; isopentenyl diphosphate from 1-deoxy-D-xylulose 5-phosphate: step 4/6. Bifunctional enzyme that catalyzes the formation of 4-diphosphocytidyl-2-C-methyl-D-erythritol from CTP and 2-C-methyl-D-erythritol 4-phosphate (MEP) (IspD), and catalyzes the conversion of 4-diphosphocytidyl-2-C-methyl-D-erythritol 2-phosphate (CDP-ME2P) to 2-C-methyl-D-erythritol 2,4-cyclodiphosphate (ME-CPP) with a corresponding release of cytidine 5-monophosphate (CMP) (IspF). In Campylobacter jejuni (strain RM1221), this protein is Bifunctional enzyme IspD/IspF.